The sequence spans 195 residues: uncharacterized protein (195 aa).

4 helical membrane passes run 89 to 106 (SWISVLLIVTIIALPLLP), 111 to 128 (HLPLAVYLMVLAGYVWKR), 149 to 168 (VKISRVGAVYLLFLAVVLLL), and 172 to 194 (LNALVVLLLIAVSCAAFFLFLNI).

The protein resides in the cell membrane. This is an uncharacterized protein from Bacillus subtilis (strain 168).